The sequence spans 426 residues: Histidine--tRNA ligase (426 aa).

This sequence belongs to the class-II aminoacyl-tRNA synthetase family. In terms of assembly, homodimer.

Its subcellular location is the cytoplasm. The enzyme catalyses tRNA(His) + L-histidine + ATP = L-histidyl-tRNA(His) + AMP + diphosphate + H(+). This Prochlorococcus marinus (strain AS9601) protein is Histidine--tRNA ligase.